We begin with the raw amino-acid sequence, 476 residues long: Transmembrane transporter FPSE_08127 (476 aa).

A helical transmembrane segment spans residues 72-92 (ILAIPAALGALGSIGGSLCII). A glycan (N-linked (GlcNAc...) asparagine) is linked at asparagine 111. 9 consecutive transmembrane segments (helical) span residues 133-153 (LVGV…VVAI), 164-184 (GTCT…FSAI), 192-212 (WLTW…VVAV), 231-251 (WAPI…NIFI), 275-295 (ACLV…LVIY), 317-337 (VAYG…QHVA), 364-384 (LGIN…VPIL), 387-407 (LLGL…PALL), and 431-451 (LIMM…VVLI).

The protein belongs to the amino acid/polyamine transporter 2 family.

It localises to the membrane. Transmembrane transporter; part of the Fusarium detoxification of benzoxazolinone cluster involved in the degradation of benzoxazolinones produced by the host plant. Maize, wheat, and rye produce the 2 benzoxazinone phytoanticipins 2,4-dihy-droxy-7-methoxy-1,4-benzoxazin-3-one (DIMBOA) and 2,4-dihydroxy-1,4-benzoxazin-3-one (DIBOA) that, due to their inherent instability once released, spontaneously degrade to the more stable corresponding benzoxazolinones, 6-methoxy-2-benzoxazolinone (MBOA) and 2-benzoxazolinone (BOA), respectively. FPSE_08127 is proposed to shuttle metabolites of benzoxazolinone degradation. This is Transmembrane transporter FPSE_08127 from Fusarium pseudograminearum (strain CS3096) (Wheat and barley crown-rot fungus).